The sequence spans 802 residues: Phenylalanine--tRNA ligase beta subunit (802 aa).

Residues 38–148 (SKNFERVIVG…SEVPVGTDIS (111 aa)) enclose the tRNA-binding domain. A B5 domain is found at 403 to 478 (VIQKKIFVLK…RVFGYHNIPA (76 aa)). Mg(2+) contacts are provided by aspartate 456, aspartate 462, and aspartate 466. The region spanning 703-796 (SLYPRCSRDI…LQEKFNAILR (94 aa)) is the FDX-ACB domain.

It belongs to the phenylalanyl-tRNA synthetase beta subunit family. Type 1 subfamily. Tetramer of two alpha and two beta subunits. It depends on Mg(2+) as a cofactor.

The protein localises to the cytoplasm. It carries out the reaction tRNA(Phe) + L-phenylalanine + ATP = L-phenylalanyl-tRNA(Phe) + AMP + diphosphate + H(+). The chain is Phenylalanine--tRNA ligase beta subunit from Buchnera aphidicola subsp. Baizongia pistaciae (strain Bp).